A 294-amino-acid chain; its full sequence is MPWLQVRLAITPEQAETYEDALLEVGAVSVTFMDAEDQPIFEPDLGTTPLWSRTHLLALFEADTDETALLAHLALLTGGELPEHHIEEIADQDWERSWMDNFQPMRFGRRLWIVPSWHAAPEPDAVNLLLDPGLAFGTGTHPTTALCLEWLDGQELAGRQVLDFGCGSGILAIAALLLGAERAVGTDIDPQALEASRDNASRNGIEPARFPVYLPADLPRQQADVLVANILAGPLVSLAPQLTGLVRPGGLLALSGILAEQAEEVREAYSAHFDLDPTAEREGWLRISGRRRAD.

Positions 144, 165, 187, and 229 each coordinate S-adenosyl-L-methionine.

It belongs to the methyltransferase superfamily. PrmA family.

It localises to the cytoplasm. It carries out the reaction L-lysyl-[protein] + 3 S-adenosyl-L-methionine = N(6),N(6),N(6)-trimethyl-L-lysyl-[protein] + 3 S-adenosyl-L-homocysteine + 3 H(+). Its function is as follows. Methylates ribosomal protein L11. This chain is Ribosomal protein L11 methyltransferase, found in Pseudomonas paraeruginosa (strain DSM 24068 / PA7) (Pseudomonas aeruginosa (strain PA7)).